The chain runs to 295 residues: tRNA dimethylallyltransferase (295 aa).

Residue 11–18 (GPTVSGKS) participates in ATP binding. 13-18 (TVSGKS) contributes to the substrate binding site. 2 interaction with substrate tRNA regions span residues 36 to 39 (DSMQ) and 158 to 162 (QRIIR).

Belongs to the IPP transferase family. Monomer. It depends on Mg(2+) as a cofactor.

It carries out the reaction adenosine(37) in tRNA + dimethylallyl diphosphate = N(6)-dimethylallyladenosine(37) in tRNA + diphosphate. In terms of biological role, catalyzes the transfer of a dimethylallyl group onto the adenine at position 37 in tRNAs that read codons beginning with uridine, leading to the formation of N6-(dimethylallyl)adenosine (i(6)A). The chain is tRNA dimethylallyltransferase from Bartonella quintana (strain Toulouse) (Rochalimaea quintana).